The chain runs to 151 residues: Ribosome maturation factor RimP (151 aa).

Belongs to the RimP family.

It localises to the cytoplasm. In terms of biological role, required for maturation of 30S ribosomal subunits. This chain is Ribosome maturation factor RimP, found in Vibrio parahaemolyticus serotype O3:K6 (strain RIMD 2210633).